We begin with the raw amino-acid sequence, 237 residues long: CDP-diacylglycerol--serine O-phosphatidyltransferase (237 aa).

A run of 8 helical transmembrane segments spans residues 3 to 23 (INPL…LGMM), 25 to 45 (IFYA…ASLI), 73 to 93 (VVAF…YNFG), 95 to 115 (IGMA…ARFN), 124 to 144 (YSFI…CVLL), 150 to 170 (FLEG…GVLM), 184 to 204 (WNLK…VRPL), and 207 to 227 (LSVF…FLMV).

Belongs to the CDP-alcohol phosphatidyltransferase class-I family.

Its subcellular location is the cell membrane. It carries out the reaction a CDP-1,2-diacyl-sn-glycerol + L-serine = a 1,2-diacyl-sn-glycero-3-phospho-L-serine + CMP + H(+). The sequence is that of CDP-diacylglycerol--serine O-phosphatidyltransferase (pssA) from Helicobacter pylori (strain J99 / ATCC 700824) (Campylobacter pylori J99).